A 2067-amino-acid chain; its full sequence is Dedicator of cytokinesis protein 11 (2067 aa).

Positions 162–269 (GVMKQGWLQK…WVNTIKQALL (108 aa)) constitute a PH domain. A disordered region spans residues 274-302 (DRRNGSETSEGSLDDDSSSQGKPESITES). The segment covering 291-302 (SSQGKPESITES) has biased composition (polar residues). A C2 DOCK-type domain is found at 643–820 (NNHLYIYPQQ…PLFKVRAYVA (178 aa)). Residues 1224–1267 (SSTIVDKEPSGSVTQNGLSRRGESRGSMYGDPGTPDINELHRRG) form a disordered region. The 427-residue stretch at 1614 to 2040 (RSYASTPELR…LSEIIHEQIF (427 aa)) folds into the DOCKER domain.

The protein belongs to the DOCK family.

Guanine nucleotide-exchange factor (GEF) that activates CDC42 by exchanging bound GDP for free GTP. The chain is Dedicator of cytokinesis protein 11 from Danio rerio (Zebrafish).